Reading from the N-terminus, the 304-residue chain is UDP-3-O-acyl-N-acetylglucosamine deacetylase (304 aa).

Zn(2+) contacts are provided by His78, His237, and Asp241. The active-site Proton donor is His264.

The protein belongs to the LpxC family. Requires Zn(2+) as cofactor.

It catalyses the reaction a UDP-3-O-[(3R)-3-hydroxyacyl]-N-acetyl-alpha-D-glucosamine + H2O = a UDP-3-O-[(3R)-3-hydroxyacyl]-alpha-D-glucosamine + acetate. It functions in the pathway glycolipid biosynthesis; lipid IV(A) biosynthesis; lipid IV(A) from (3R)-3-hydroxytetradecanoyl-[acyl-carrier-protein] and UDP-N-acetyl-alpha-D-glucosamine: step 2/6. Catalyzes the hydrolysis of UDP-3-O-myristoyl-N-acetylglucosamine to form UDP-3-O-myristoylglucosamine and acetate, the committed step in lipid A biosynthesis. This chain is UDP-3-O-acyl-N-acetylglucosamine deacetylase, found in Polynucleobacter necessarius subsp. necessarius (strain STIR1).